Consider the following 261-residue polypeptide: tRNA (guanine-N(7)-)-methyltransferase (261 aa).

The S-adenosyl-L-methionine site is built by Glu-75, Glu-100, Asp-127, and Asp-150. The active site involves Asp-150. Lys-154 serves as a coordination point for substrate. The tract at residues 156–161 (RHNKRR) is interaction with RNA. Residues Asp-186 and 223 to 226 (THFE) each bind substrate.

The protein belongs to the class I-like SAM-binding methyltransferase superfamily. TrmB family.

The enzyme catalyses guanosine(46) in tRNA + S-adenosyl-L-methionine = N(7)-methylguanosine(46) in tRNA + S-adenosyl-L-homocysteine. It participates in tRNA modification; N(7)-methylguanine-tRNA biosynthesis. Its function is as follows. Catalyzes the formation of N(7)-methylguanine at position 46 (m7G46) in tRNA. The protein is tRNA (guanine-N(7)-)-methyltransferase of Xanthomonas campestris pv. campestris (strain 8004).